We begin with the raw amino-acid sequence, 356 residues long: DNA polymerase IV (356 aa).

Positions 7–187 constitute a UmuC domain; sequence IIHVDMDAFY…LPVNRVPGVG (181 aa). 2 residues coordinate Mg(2+): Asp-11 and Asp-105. The active site involves Glu-106.

This sequence belongs to the DNA polymerase type-Y family. As to quaternary structure, monomer. Requires Mg(2+) as cofactor.

The protein resides in the cytoplasm. It catalyses the reaction DNA(n) + a 2'-deoxyribonucleoside 5'-triphosphate = DNA(n+1) + diphosphate. Functionally, poorly processive, error-prone DNA polymerase involved in untargeted mutagenesis. Copies undamaged DNA at stalled replication forks, which arise in vivo from mismatched or misaligned primer ends. These misaligned primers can be extended by PolIV. Exhibits no 3'-5' exonuclease (proofreading) activity. May be involved in translesional synthesis, in conjunction with the beta clamp from PolIII. This is DNA polymerase IV from Stenotrophomonas maltophilia (strain R551-3).